Reading from the N-terminus, the 170-residue chain is Crossover junction endodeoxyribonuclease RuvC (170 aa).

Catalysis depends on residues Asp-9, Glu-70, and Asp-145. Residues Asp-9, Glu-70, and Asp-145 each contribute to the Mg(2+) site.

This sequence belongs to the RuvC family. As to quaternary structure, homodimer which binds Holliday junction (HJ) DNA. The HJ becomes 2-fold symmetrical on binding to RuvC with unstacked arms; it has a different conformation from HJ DNA in complex with RuvA. In the full resolvosome a probable DNA-RuvA(4)-RuvB(12)-RuvC(2) complex forms which resolves the HJ. It depends on Mg(2+) as a cofactor.

It is found in the cytoplasm. The enzyme catalyses Endonucleolytic cleavage at a junction such as a reciprocal single-stranded crossover between two homologous DNA duplexes (Holliday junction).. Its function is as follows. The RuvA-RuvB-RuvC complex processes Holliday junction (HJ) DNA during genetic recombination and DNA repair. Endonuclease that resolves HJ intermediates. Cleaves cruciform DNA by making single-stranded nicks across the HJ at symmetrical positions within the homologous arms, yielding a 5'-phosphate and a 3'-hydroxyl group; requires a central core of homology in the junction. The consensus cleavage sequence is 5'-(A/T)TT(C/G)-3'. Cleavage occurs on the 3'-side of the TT dinucleotide at the point of strand exchange. HJ branch migration catalyzed by RuvA-RuvB allows RuvC to scan DNA until it finds its consensus sequence, where it cleaves and resolves the cruciform DNA. This Chlamydia trachomatis serovar A (strain ATCC VR-571B / DSM 19440 / HAR-13) protein is Crossover junction endodeoxyribonuclease RuvC.